Consider the following 95-residue polypeptide: Large ribosomal subunit protein uL23c (95 aa).

It belongs to the universal ribosomal protein uL23 family. In terms of assembly, part of the 50S ribosomal subunit.

The protein resides in the plastid. It localises to the chloroplast. In terms of biological role, binds to 23S rRNA. The chain is Large ribosomal subunit protein uL23c (rpl23) from Guillardia theta (Cryptophyte).